A 448-amino-acid chain; its full sequence is uncharacterized protein (448 aa).

The chain crosses the membrane as a helical span at residues 19-41 (LGLLVPFLLLLFSCTNTVGYGVL). Residues 105–181 (YSYATSVLDG…CFSHGLSLFD (77 aa)) enclose the SH3b domain.

The protein localises to the membrane. This is an uncharacterized protein from Treponema pallidum (strain Nichols).